Here is a 1885-residue protein sequence, read N- to C-terminus: Fatty acid synthase subunit alpha (1885 aa).

Residues Pro92 to Glu107 show a composition bias toward basic and acidic residues. Residues Pro92–Ser140 form a disordered region. The span at Ser108–Pro126 shows a compositional bias: low complexity. A Carrier domain is found at Val146 to Gln221. Residue Ser181 is modified to O-(pantetheine 4'-phosphoryl)serine. The region spanning Ile1121 to His1661 is the Ketosynthase family 3 (KS3) domain. Residues Cys1304, His1546, and His1587 each act as for beta-ketoacyl synthase activity in the active site. Residues Asp1771, Val1772, and Glu1773 each contribute to the Mg(2+) site. Acetyl-CoA is bound by residues Asp1771–Glu1773, Tyr1797, Ser1807, Glu1816–Ser1826, Arg1840–Asn1843, and Ile1870–His1872. Ser1871 and His1872 together coordinate Mg(2+).

This sequence belongs to the thiolase-like superfamily. Fungal fatty acid synthetase subunit alpha family. [Alpha(6)beta(6)] hexamers of two multifunctional subunits (alpha and beta).

The catalysed reaction is acetyl-CoA + n malonyl-CoA + 2n NADPH + 4n H(+) = a long-chain-acyl-CoA + n CoA + n CO2 + 2n NADP(+).. It catalyses the reaction a fatty acyl-[ACP] + malonyl-[ACP] + H(+) = a 3-oxoacyl-[ACP] + holo-[ACP] + CO2. The enzyme catalyses a (3R)-hydroxyacyl-[ACP] + NADP(+) = a 3-oxoacyl-[ACP] + NADPH + H(+). Fatty acid synthetase catalyzes the formation of long-chain fatty acids from acetyl-CoA, malonyl-CoA and NADPH. The alpha subunit contains domains for: acyl carrier protein, 3-oxoacyl-[acyl-carrier-protein] reductase, and 3-oxoacyl-[acyl-carrier-protein] synthase. This chain is Fatty acid synthase subunit alpha (FAS2), found in Candida albicans (Yeast).